A 260-amino-acid chain; its full sequence is Ubiquinone/menaquinone biosynthesis C-methyltransferase UbiE (260 aa).

Residues Thr-83, Asp-104, and 132–133 (NA) contribute to the S-adenosyl-L-methionine site.

It belongs to the class I-like SAM-binding methyltransferase superfamily. MenG/UbiE family.

It catalyses the reaction a 2-demethylmenaquinol + S-adenosyl-L-methionine = a menaquinol + S-adenosyl-L-homocysteine + H(+). It carries out the reaction a 2-methoxy-6-(all-trans-polyprenyl)benzene-1,4-diol + S-adenosyl-L-methionine = a 5-methoxy-2-methyl-3-(all-trans-polyprenyl)benzene-1,4-diol + S-adenosyl-L-homocysteine + H(+). Its pathway is quinol/quinone metabolism; menaquinone biosynthesis; menaquinol from 1,4-dihydroxy-2-naphthoate: step 2/2. It participates in cofactor biosynthesis; ubiquinone biosynthesis. Functionally, methyltransferase required for the conversion of demethylmenaquinol (DMKH2) to menaquinol (MKH2) and the conversion of 2-polyprenyl-6-methoxy-1,4-benzoquinol (DDMQH2) to 2-polyprenyl-3-methyl-6-methoxy-1,4-benzoquinol (DMQH2). The polypeptide is Ubiquinone/menaquinone biosynthesis C-methyltransferase UbiE (Bartonella tribocorum (strain CIP 105476 / IBS 506)).